The chain runs to 393 residues: Sulfate adenylyltransferase (393 aa).

This sequence belongs to the sulfate adenylyltransferase family.

It carries out the reaction sulfate + ATP + H(+) = adenosine 5'-phosphosulfate + diphosphate. It participates in sulfur metabolism; hydrogen sulfide biosynthesis; sulfite from sulfate: step 1/3. In Synechococcus sp. (strain JA-3-3Ab) (Cyanobacteria bacterium Yellowstone A-Prime), this protein is Sulfate adenylyltransferase.